Consider the following 256-residue polypeptide: Hydroxyacylglutathione hydrolase (256 aa).

His-57, His-59, Asp-61, His-62, His-115, Asp-134, and His-172 together coordinate Zn(2+).

It belongs to the metallo-beta-lactamase superfamily. Glyoxalase II family. As to quaternary structure, monomer. Zn(2+) is required as a cofactor.

It catalyses the reaction an S-(2-hydroxyacyl)glutathione + H2O = a 2-hydroxy carboxylate + glutathione + H(+). The protein operates within secondary metabolite metabolism; methylglyoxal degradation; (R)-lactate from methylglyoxal: step 2/2. Functionally, thiolesterase that catalyzes the hydrolysis of S-D-lactoyl-glutathione to form glutathione and D-lactic acid. This is Hydroxyacylglutathione hydrolase from Rhodospirillum rubrum (strain ATCC 11170 / ATH 1.1.1 / DSM 467 / LMG 4362 / NCIMB 8255 / S1).